The sequence spans 322 residues: Sulfate adenylyltransferase subunit 2 (322 aa).

The protein belongs to the PAPS reductase family. CysD subfamily. As to quaternary structure, heterodimer composed of CysD, the smaller subunit, and CysN.

It carries out the reaction sulfate + ATP + H(+) = adenosine 5'-phosphosulfate + diphosphate. It functions in the pathway sulfur metabolism; hydrogen sulfide biosynthesis; sulfite from sulfate: step 1/3. With CysN forms the ATP sulfurylase (ATPS) that catalyzes the adenylation of sulfate producing adenosine 5'-phosphosulfate (APS) and diphosphate, the first enzymatic step in sulfur assimilation pathway. APS synthesis involves the formation of a high-energy phosphoric-sulfuric acid anhydride bond driven by GTP hydrolysis by CysN coupled to ATP hydrolysis by CysD. This is Sulfate adenylyltransferase subunit 2 from Bradyrhizobium sp. (strain BTAi1 / ATCC BAA-1182).